The chain runs to 303 residues: Taste receptor type 2 member 2 (303 aa).

At 1 to 10 the chain is on the extracellular side; sequence MALSFSAILH. The chain crosses the membrane as a helical span at residues 11-31; that stretch reads IIMMSAEFFTGITVNGFLIIV. Over 32-56 the chain is Cytoplasmic; it reads NCNELIKHRKLMPIQILLMCIGMSR. The chain crosses the membrane as a helical span at residues 57-77; that stretch reads FGLQMVLMVQSFFSVFFPLLY. The Extracellular portion of the chain corresponds to 78–79; it reads VK. The helical transmembrane segment at 80-100 threads the bilayer; sequence IIYGAAMMFLWMFFSSISLWF. The Cytoplasmic segment spans residues 101–102; the sequence is AT. Residues 103 to 123 traverse the membrane as a helical segment; that stretch reads CLSVFYCLKISGFTQSCFLWL. Residues 124–129 are Extracellular-facing; it reads KFRIPK. A helical membrane pass occupies residues 130 to 150; the sequence is LIPWLLLGSVLASVSIASVCI. The Cytoplasmic segment spans residues 151-185; the sequence is EVDYAKNVEEDALRNTTLKKSKTKIKKISEVLLVN. The chain crosses the membrane as a helical span at residues 186 to 206; it reads LALIFPLAIFVMCTSMLLISL. Topologically, residues 207–234 are extracellular; the sequence is YKHTHRMQHGSHGFRNANTEAHINALKT. A helical membrane pass occupies residues 235–255; that stretch reads VITFFCFFISYFAAFMTNMTF. At 256 to 277 the chain is on the cytoplasmic side; it reads SLPYRSHQFFMLKDIMAAYPSG.

This sequence belongs to the G-protein coupled receptor T2R family.

The protein resides in the cell membrane. In terms of biological role, bitter taste receptor that detects natural and synthetic bitter compounds. The polypeptide is Taste receptor type 2 member 2 (Homo sapiens (Human)).